Reading from the N-terminus, the 538-residue chain is Probable ribonuclease 3 (538 aa).

RNase III domains lie at 24–149 (IKSY…LNFG) and 238–381 (ASQM…EGYL). The 70-residue stretch at 408-477 (LISQNIEVLH…NYKDLILQLY (70 aa)) folds into the DRBM domain.

The protein belongs to the ribonuclease III family.

The catalysed reaction is Endonucleolytic cleavage to 5'-phosphomonoester.. In terms of biological role, digests double-stranded RNA. This chain is Probable ribonuclease 3, found in Acanthamoeba polyphaga (Amoeba).